A 119-amino-acid chain; its full sequence is V-type proton ATPase subunit F (119 aa).

Belongs to the V-ATPase F subunit family. As to quaternary structure, V-ATPase is a heteromultimeric enzyme made up of two complexes: the ATP-hydrolytic V1 complex and the proton translocation V0 complex. The V1 complex consists of three catalytic AB heterodimers that form a heterohexamer, three peripheral stalks each consisting of EG heterodimers, one central rotor including subunits D and F, and the regulatory subunits C and H. The proton translocation complex V0 consists of the proton transport subunit a, a ring of proteolipid subunits c9c'', rotary subunit d, subunits e and f, and the accessory subunits ATP6AP1/Ac45 and ATP6AP2/PRR. Expressed in brain (at protein level).

It localises to the cytoplasmic vesicle. The protein localises to the secretory vesicle. Its subcellular location is the synaptic vesicle membrane. It is found in the clathrin-coated vesicle membrane. In terms of biological role, subunit of the V1 complex of vacuolar(H+)-ATPase (V-ATPase), a multisubunit enzyme composed of a peripheral complex (V1) that hydrolyzes ATP and a membrane integral complex (V0) that translocates protons. V-ATPase is responsible for acidifying and maintaining the pH of intracellular compartments and in some cell types, is targeted to the plasma membrane, where it is responsible for acidifying the extracellular environment. The polypeptide is V-type proton ATPase subunit F (ATP6V1F) (Bos taurus (Bovine)).